The primary structure comprises 119 residues: NADH-quinone oxidoreductase subunit A (119 aa).

The next 3 helical transmembrane spans lie at 7–27 (YPVL…VSIG), 63–83 (LVAI…PWGV), and 88–108 (IGWP…LGFA).

It belongs to the complex I subunit 3 family. In terms of assembly, NDH-1 is composed of 14 different subunits. Subunits NuoA, H, J, K, L, M, N constitute the membrane sector of the complex.

It localises to the cell inner membrane. It catalyses the reaction a quinone + NADH + 5 H(+)(in) = a quinol + NAD(+) + 4 H(+)(out). Its function is as follows. NDH-1 shuttles electrons from NADH, via FMN and iron-sulfur (Fe-S) centers, to quinones in the respiratory chain. The immediate electron acceptor for the enzyme in this species is believed to be ubiquinone. Couples the redox reaction to proton translocation (for every two electrons transferred, four hydrogen ions are translocated across the cytoplasmic membrane), and thus conserves the redox energy in a proton gradient. This Burkholderia ambifaria (strain MC40-6) protein is NADH-quinone oxidoreductase subunit A.